A 104-amino-acid chain; its full sequence is Enhancer of rudimentary homolog (104 aa).

Ser-2 is subject to N-acetylserine. Thr-11 carries the phosphothreonine modification. Lys-12 is covalently cross-linked (Glycyl lysine isopeptide (Lys-Gly) (interchain with G-Cter in SUMO2)).

This sequence belongs to the E(R) family. In terms of assembly, homodimer.

The protein resides in the nucleus. May have a role in the cell cycle. The polypeptide is Enhancer of rudimentary homolog (ERH) (Bos taurus (Bovine)).